The following is a 279-amino-acid chain: L-ascorbate peroxidase 5, peroxisomal (279 aa).

His-39 acts as the Proton acceptor in catalysis. The tract at residues 111–134 is disordered; sequence PFTPGRKDADSADDGELPNPNEGA. His-158 contacts heme b. Residues Thr-159, Thr-175, and Asp-182 each contribute to the K(+) site. Residues 251–271 traverse the membrane as a helical segment; it reads AVTQQTLGIAVAAAVVIFTIC. An AKR2A-binding sequence (ABS) required for peroxisome membrane targeting motif is present at residues 272 to 279; that stretch reads YEASRRGK.

It belongs to the peroxidase family. Ascorbate peroxidase subfamily. As to quaternary structure, interacts with AKR2A and AKR2B. Requires heme b as cofactor.

It localises to the peroxisome membrane. It catalyses the reaction L-ascorbate + H2O2 = L-dehydroascorbate + 2 H2O. In terms of biological role, plays a key role in hydrogen peroxide removal. The protein is L-ascorbate peroxidase 5, peroxisomal (APX5) of Arabidopsis thaliana (Mouse-ear cress).